Consider the following 90-residue polypeptide: ESAT-6-like protein EsxE (90 aa).

This sequence belongs to the WXG100 family. ESAT-6 subfamily.

It is found in the secreted. This is ESAT-6-like protein EsxE from Mycobacterium tuberculosis (strain CDC 1551 / Oshkosh).